The chain runs to 398 residues: Elongation factor Tu (398 aa).

Positions 10-207 constitute a tr-type G domain; that stretch reads KPHVNIGTIG…TVDEYIPEPE (198 aa). The interval 19–26 is G1; the sequence is GHVDHGKT. 19 to 26 contributes to the GTP binding site; sequence GHVDHGKT. Thr26 contributes to the Mg(2+) binding site. The tract at residues 63–67 is G2; that stretch reads GITIN. Positions 84-87 are G3; it reads DAPG. Residues 84 to 88 and 139 to 142 each bind GTP; these read DAPGH and NKVD. The segment at 139–142 is G4; sequence NKVD. The segment at 177–179 is G5; that stretch reads SAL.

Belongs to the TRAFAC class translation factor GTPase superfamily. Classic translation factor GTPase family. EF-Tu/EF-1A subfamily. In terms of assembly, monomer.

Its subcellular location is the cytoplasm. It catalyses the reaction GTP + H2O = GDP + phosphate + H(+). GTP hydrolase that promotes the GTP-dependent binding of aminoacyl-tRNA to the A-site of ribosomes during protein biosynthesis. This is Elongation factor Tu from Streptococcus pneumoniae serotype 4 (strain ATCC BAA-334 / TIGR4).